The chain runs to 504 residues: ATP synthase subunit alpha 2 (504 aa).

169-176 (GDRQTGKT) is an ATP binding site.

Belongs to the ATPase alpha/beta chains family. As to quaternary structure, F-type ATPases have 2 components, CF(1) - the catalytic core - and CF(0) - the membrane proton channel. CF(1) has five subunits: alpha(3), beta(3), gamma(1), delta(1), epsilon(1). CF(0) has three main subunits: a(1), b(2) and c(9-12). The alpha and beta chains form an alternating ring which encloses part of the gamma chain. CF(1) is attached to CF(0) by a central stalk formed by the gamma and epsilon chains, while a peripheral stalk is formed by the delta and b chains.

The protein localises to the cell membrane. It catalyses the reaction ATP + H2O + 4 H(+)(in) = ADP + phosphate + 5 H(+)(out). Functionally, produces ATP from ADP in the presence of a proton gradient across the membrane. The alpha chain is a regulatory subunit. The protein is ATP synthase subunit alpha 2 of Listeria welshimeri serovar 6b (strain ATCC 35897 / DSM 20650 / CCUG 15529 / CIP 8149 / NCTC 11857 / SLCC 5334 / V8).